The following is a 431-amino-acid chain: MWAKLFLRPSFVNRVHLTWSCRALLTMQLKTKEFESLFTDGLVGLAEIFQKNQFELRIAGGAVRDLLSGKRPEDVDFATTATPEEMKSMFQTAGVRMINNKGEKHGTITARLHEENFEVTTLRVDVQTDGRHAEVEFTTDWQKDAERRDLTINSMFLGLDGTLYDYFQGYEDLKNRKVRFVGSASLRIQEDYLRILRYFRFYGRVAAEPGQHEPETLEAIRENARGLAGISGERIWVELKKMLVGNHAGHLLELVYELGLAQYTGLPADGDVEEMKQVWQRAHVSSPKPMTVLAALFRKQADVENLDQRLKVSREEKNLGLFLVKYRRDLVKGHDEHDTMKPYTDFITDSREPDTQSKVLELLKYQGENKLLDELRRWSIPRFPVSGHDLRKLGYTSGKEIGTILQELRDMWKKSRYQMSKDELLSTLSQS.

The N-terminal 31 residues, 1–31 (MWAKLFLRPSFVNRVHLTWSCRALLTMQLKT), are a transit peptide targeting the mitochondrion. ATP contacts are provided by Gly-61 and Arg-64. Residues Gly-61 and Arg-64 each contribute to the CTP site. Mg(2+)-binding residues include Asp-74 and Asp-76. Residues Arg-148, Asp-191, Arg-194, Arg-197, and Arg-200 each contribute to the ATP site. CTP-binding residues include Arg-148, Asp-191, Arg-194, Arg-197, and Arg-200.

It belongs to the tRNA nucleotidyltransferase/poly(A) polymerase family. Monomer, and homodimer. It depends on Mg(2+) as a cofactor. In terms of tissue distribution, expressed ubiquitously during early embryogenesis.

Its subcellular location is the mitochondrion. The protein localises to the cytoplasm. It localises to the nucleus. The enzyme catalyses a tRNA precursor + 2 CTP + ATP = a tRNA with a 3' CCA end + 3 diphosphate. It catalyses the reaction a tRNA with a 3' CCA end + 2 CTP + ATP = a tRNA with a 3' CCACCA end + 3 diphosphate. In terms of biological role, nucleotidyltransferase that catalyzes the addition and repair of the essential 3'-terminal CCA sequence in tRNAs, which is necessary for the attachment of amino acids to the 3' terminus of tRNA molecules, using CTP and ATP as substrates. tRNA 3'-terminal CCA addition is required both for tRNA processing and repair. Promotes tRNA repair and recycling downstream of the ribosome-associated quality control (RQC) pathway by mediating addition of the tRNA 3'-terminal CCA following cleavage by ankzf1 and repair by elac1. Also involved in tRNA surveillance by mediating tandem CCA addition to generate a CCACCA at the 3' terminus of unstable tRNAs and tRNA-like transcripts. While stable tRNAs receive only 3'-terminal CCA, unstable tRNAs beginning with GG are marked with CCACCA and rapidly degraded. The structural flexibility of RNA controls the choice between CCA versus CCACCA addition: following the first CCA addition cycle, nucleotide-binding to the active site triggers a clockwise screw motion, producing torque on the RNA. This ejects stable RNAs, whereas unstable RNAs are refolded while bound to the enzyme and subjected to a second CCA catalytic cycle. The sequence is that of CCA tRNA nucleotidyltransferase 1, mitochondrial from Danio rerio (Zebrafish).